Reading from the N-terminus, the 44-residue chain is M-factor (44 aa).

Residues 1–32 (MDSIATNTHSSSIVNAYNNNPTDVVKTQNIKN) constitute a propeptide that is removed on maturation. Cys41 carries the cysteine methyl ester modification. Cys41 carries the S-farnesyl cysteine lipid modification. The propeptide at 42–44 (VIA) is removed in mature form.

The protein localises to the secreted. Functionally, M-factor is a mating pheromone produced by M-type mating cells. All three mfm genes contribute to the production of M-factor. This chain is M-factor (mfm2), found in Schizosaccharomyces pombe (strain 972 / ATCC 24843) (Fission yeast).